Here is a 226-residue protein sequence, read N- to C-terminus: MGQKVNPVGFRLGVNRGWDSVWYAKKKDFGNYLIEDFKIRAYIKKNVVNSGVSKVMIERTSNKCFVTIYTSRPGFVIGKKGSDIDKIKNNLSKFTNNEVTLNIKEVKKPETNAYLVAENIAQQLVKRISYRRAMKRAMQSCLRLGAKGIKVSISGRLGGNEIARTEWLREGSIPSHTLRADIDYAEAEALTTFGIIGIKIWIYKGEVFAKEFSQETNKIVPKEVKE.

One can recognise a KH type-2 domain in the interval 39–107; that stretch reads IRAYIKKNVV…EVTLNIKEVK (69 aa).

Belongs to the universal ribosomal protein uS3 family. Part of the 30S ribosomal subunit. Forms a tight complex with proteins S10 and S14.

In terms of biological role, binds the lower part of the 30S subunit head. Binds mRNA in the 70S ribosome, positioning it for translation. In Pelagibacter ubique (strain HTCC1062), this protein is Small ribosomal subunit protein uS3.